Here is a 217-residue protein sequence, read N- to C-terminus: Cytochrome c biogenesis ATP-binding export protein CcmA (217 aa).

Positions 6–216 (LQLEQLACQR…QYKFFDQGNM (211 aa)) constitute an ABC transporter domain. 38-45 (GHNGIGKT) serves as a coordination point for ATP.

This sequence belongs to the ABC transporter superfamily. CcmA exporter (TC 3.A.1.107) family. In terms of assembly, the complex is composed of two ATP-binding proteins (CcmA) and two transmembrane proteins (CcmB).

It is found in the cell inner membrane. The enzyme catalyses heme b(in) + ATP + H2O = heme b(out) + ADP + phosphate + H(+). Its function is as follows. Part of the ABC transporter complex CcmAB involved in the biogenesis of c-type cytochromes; once thought to export heme, this seems not to be the case, but its exact role is uncertain. Responsible for energy coupling to the transport system. The protein is Cytochrome c biogenesis ATP-binding export protein CcmA of Histophilus somni (strain 129Pt) (Haemophilus somnus).